We begin with the raw amino-acid sequence, 309 residues long: ADP-L-glycero-D-manno-heptose-6-epimerase (309 aa).

NADP(+) is bound by residues Phe10–Ile11, Asp31–Asn32, Lys38, Lys53, Glu75–Ser79, and Asn92. Catalysis depends on Tyr140, which acts as the Proton acceptor. Lys144 provides a ligand contact to NADP(+). Asn169 contacts substrate. Positions 170 and 178 each coordinate NADP(+). Catalysis depends on Lys178, which acts as the Proton acceptor. Substrate is bound by residues Ser180, His187, Phe201–Ser204, Arg209, and Tyr272.

The protein belongs to the NAD(P)-dependent epimerase/dehydratase family. HldD subfamily. Homopentamer. NADP(+) is required as a cofactor.

It carries out the reaction ADP-D-glycero-beta-D-manno-heptose = ADP-L-glycero-beta-D-manno-heptose. Its pathway is nucleotide-sugar biosynthesis; ADP-L-glycero-beta-D-manno-heptose biosynthesis; ADP-L-glycero-beta-D-manno-heptose from D-glycero-beta-D-manno-heptose 7-phosphate: step 4/4. Functionally, catalyzes the interconversion between ADP-D-glycero-beta-D-manno-heptose and ADP-L-glycero-beta-D-manno-heptose via an epimerization at carbon 6 of the heptose. The chain is ADP-L-glycero-D-manno-heptose-6-epimerase from Enterobacter sp. (strain 638).